The chain runs to 742 residues: MTDPEISAVETVLDNGKFGTRTVKFETGLLARQAAGAVTAYLDEDTMLLSATTAGKHPKDHFDFFPLTIDVEERMYAAGKIPGSFFRSEGRPGEDAILTCRLIDRPLRPTFKKGLRNEVQVVITVMALNPDTPYDVLAINAASLSTQLSGLPFSGPVGGVRVALIEGQWVAFPTHSQLENAVFDMVVAGRVTETGDVAIMMVEAEATEQTWDLVRSGTQAPTEEIVAGGLDAAKPFIKQLCEAQVELANVAAKPVQDFPVFLDYEDDVYDAVEAAVKAELAAAMKIADKQERNDRTDELKDEVLAKLGEQFEGREKEIGAAFRSVNKQVVRESILRDKVRIDGRGLADIRPLHAEVGVIPRVHGSALFERGETQILGVTTLDMLKMEQQLDTLSPEKHRRYMHKYVFPPFSTGETGRVGSPKRREVGHGALARRALLPVLPTREEFPYAIRQLSEAMGSNGSTSMGSVCASTLALLQAGVPLKAPVAGIAMGLVSGEIDGQLQYVALTDILGAEDAFGDMDFKVAGTREFVTALQLDTKLDGIPAEVLAQALTQARDARLTILDVMAEAIDEPEEMSAYAPRIITITIPVDKIGEVIGPKGKIINQIQDDTGASISIEDDGTIYIGATNGEAAEAAKNAVNAIANPTMPEVGERYLGTVVKTTNFGAFVSLMPGKDGLLHISKLRSLAGGKRVDAVEDVVSVGQKIQVQIAEIDDRGKLSLVPVVEGDQADSDTAEAGSEEE.

Positions 515 and 521 each coordinate Mg(2+). The region spanning 581–640 is the KH domain; sequence PRIITITIPVDKIGEVIGPKGKIINQIQDDTGASISIEDDGTIYIGATNGEAAEAAKNAV. Residues 652–724 enclose the S1 motif domain; that stretch reads GERYLGTVVK…DRGKLSLVPV (73 aa).

The protein belongs to the polyribonucleotide nucleotidyltransferase family. It depends on Mg(2+) as a cofactor.

It localises to the cytoplasm. The enzyme catalyses RNA(n+1) + phosphate = RNA(n) + a ribonucleoside 5'-diphosphate. Involved in mRNA degradation. Catalyzes the phosphorolysis of single-stranded polyribonucleotides processively in the 3'- to 5'-direction. In Nocardioides sp. (strain ATCC BAA-499 / JS614), this protein is Polyribonucleotide nucleotidyltransferase.